Here is an 830-residue protein sequence, read N- to C-terminus: Probable glucan 1,3-beta-glucosidase D (830 aa).

Basic and acidic residues-rich tracts occupy residues methionine 1–leucine 11 and valine 74–aspartate 84. Disordered regions lie at residues methionine 1–tryptophan 91, methionine 127–lysine 163, and glycine 260–alanine 297. The Cytoplasmic segment spans residues methionine 1–lysine 307. Residues glycine 147–lysine 163 are compositionally biased toward basic residues. The chain crosses the membrane as a helical; Signal-anchor for type II membrane protein span at residues threonine 308 to isoleucine 328. The Extracellular segment spans residues glutamate 329–tyrosine 830. Asparagine 341, asparagine 376, asparagine 381, asparagine 393, asparagine 397, asparagine 546, and asparagine 558 each carry an N-linked (GlcNAc...) asparagine glycan. The Proton donor role is filled by glutamate 597. 3 N-linked (GlcNAc...) asparagine glycosylation sites follow: asparagine 610, asparagine 669, and asparagine 689. The active-site Nucleophile is glutamate 702.

The protein belongs to the glycosyl hydrolase 5 (cellulase A) family.

Its subcellular location is the cell membrane. It catalyses the reaction Successive hydrolysis of beta-D-glucose units from the non-reducing ends of (1-&gt;3)-beta-D-glucans, releasing alpha-glucose.. Glucosidase involved in the degradation of cellulosic biomass. Active on lichenan. The protein is Probable glucan 1,3-beta-glucosidase D (exgD) of Aspergillus niger (strain ATCC MYA-4892 / CBS 513.88 / FGSC A1513).